Here is a 453-residue protein sequence, read N- to C-terminus: Secreted triacylglycerol lipase LIP2 (453 aa).

The first 19 residues, 1–19 (MKLSLVVLTLISVAAQALA), serve as a signal peptide directing secretion. Asn-98 carries N-linked (GlcNAc...) asparagine glycosylation. A disulfide bridge links Cys-115 with Cys-284. Ser-197 serves as the catalytic Nucleophile. Asn-230 carries an N-linked (GlcNAc...) asparagine glycan. Residues Asp-344 and His-378 contribute to the active site. Cys-360 and Cys-406 form a disulfide bridge.

This sequence belongs to the AB hydrolase superfamily. Lipase family. Class Lip subfamily.

The protein resides in the secreted. The catalysed reaction is a triacylglycerol + H2O = a diacylglycerol + a fatty acid + H(+). It carries out the reaction a monoacylglycerol + H2O = glycerol + a fatty acid + H(+). The enzyme catalyses a diacylglycerol + H2O = a monoacylglycerol + a fatty acid + H(+). With respect to regulation, the activity is significantly increased in the presence of Triton X-100 and partially inhibited by PMSF but unaffected by univalent and divalent metal ions. Activity is significantly decreased in acetate buffer compared to that in citrate buffer at the same pH. In terms of biological role, major secreted lipase involved in Dandruff and seborrheic dermatitis (D/SD) probably via lipase-mediated breakdown of sebaceous lipids and release of irritating free fatty acids. Has triacylglycerol lipase activity and is able to hydrolyze triolein, tristearin, trilinolein, tripalmitoylglycerol and trihexadecenoin. Hydrolyze diacylglycerols such as distearin, dilinolein, dipalmitoylglycerol and dipalmitolein. Shows high esterase activity against 4-nitrophenyl palmitate and 1-naphthyl palmitate but not 1-naphthyl acetate, suggesting that it specifically recognizes fatty acids. Mostly converts monoolein to di- and triolein, while free fatty acids are only produced in low amounts. The polypeptide is Secreted triacylglycerol lipase LIP2 (Malassezia globosa (strain ATCC MYA-4612 / CBS 7966) (Dandruff-associated fungus)).